A 308-amino-acid chain; its full sequence is KH domain-containing protein At4g26480 (308 aa).

The disordered stretch occupies residues 1–26 (MMMMTSLGGGAGGGGGGGGSGGGRFV). Residues 7-24 (LGGGAGGGGGGGGSGGGR) are compositionally biased toward gly residues. The 68-residue stretch at 165–232 (DIPVDKYPNY…EHLNEPLHIL (68 aa)) folds into the KH domain. The segment at 284 to 308 (EEGSPMSGSISPYNSLGMKRAKTRG) is disordered. S294 bears the Phosphoserine mark.

The protein localises to the nucleus. The polypeptide is KH domain-containing protein At4g26480 (Arabidopsis thaliana (Mouse-ear cress)).